The following is a 120-amino-acid chain: Small ribosomal subunit protein eS24 (120 aa).

Positions 101-120 are disordered; that stretch reads RDAGTKQKKGGSKGGQGAKG.

Belongs to the eukaryotic ribosomal protein eS24 family.

In Saccharolobus solfataricus (strain ATCC 35092 / DSM 1617 / JCM 11322 / P2) (Sulfolobus solfataricus), this protein is Small ribosomal subunit protein eS24.